A 270-amino-acid polypeptide reads, in one-letter code: Proteasome inhibitor PI31 subunit (270 aa).

A2 carries the N-acetylalanine modification. The tract at residues A2–N150 is important for homodimerization and interaction with FBXO7. S152 bears the Phosphoserine mark. R204 is subject to Omega-N-methylarginine. At R218 the chain carries Asymmetric dimethylarginine. A disordered region spans residues L220–L270. Residue R230 is modified to Omega-N-methylarginine. S251 carries the phosphoserine modification. Residues G254–G264 are compositionally biased toward pro residues.

Belongs to the proteasome inhibitor PI31 family. Monomer and homodimer. Interacts with FBXO7.

The protein resides in the cytoplasm. It is found in the endoplasmic reticulum. Functionally, plays an important role in control of proteasome function. Inhibits the hydrolysis of protein and peptide substrates by the 20S proteasome. Also inhibits the activation of the proteasome by the proteasome regulatory proteins PA700 and PA28. The polypeptide is Proteasome inhibitor PI31 subunit (PSMF1) (Bos taurus (Bovine)).